A 310-amino-acid chain; its full sequence is Light-independent protochlorophyllide reductase iron-sulfur ATP-binding protein (310 aa).

Residues 53–58 (GIGKST) and Lys82 each bind ATP. Position 57 (Ser57) interacts with Mg(2+). [4Fe-4S] cluster contacts are provided by Cys138 and Cys172. Residues 223–224 (NR) and 247–249 (PAL) each bind ATP.

This sequence belongs to the NifH/BchL/ChlL family. Homodimer. Protochlorophyllide reductase is composed of three subunits; BchL, BchN and BchB. Requires [4Fe-4S] cluster as cofactor.

The catalysed reaction is chlorophyllide a + oxidized 2[4Fe-4S]-[ferredoxin] + 2 ADP + 2 phosphate = protochlorophyllide a + reduced 2[4Fe-4S]-[ferredoxin] + 2 ATP + 2 H2O. It participates in porphyrin-containing compound metabolism; bacteriochlorophyll biosynthesis (light-independent). Functionally, component of the dark-operative protochlorophyllide reductase (DPOR) that uses Mg-ATP and reduced ferredoxin to reduce ring D of protochlorophyllide (Pchlide) to form chlorophyllide a (Chlide). This reaction is light-independent. The L component serves as a unique electron donor to the NB-component of the complex, and binds Mg-ATP. This Rhodopseudomonas palustris (strain BisA53) protein is Light-independent protochlorophyllide reductase iron-sulfur ATP-binding protein.